Consider the following 400-residue polypeptide: CinA-like protein (400 aa).

It belongs to the CinA family.

This chain is CinA-like protein, found in Escherichia coli (strain SE11).